Reading from the N-terminus, the 224-residue chain is MKFAVIVFPGSNCDVDCYYAVKDGLGEGVEYVWHQEKNLSKYDVIMLPGGFSYGDYLRAGAIARFSPVMEAVREEAEKGKFIIGICNGFQILTEAGLLPGALRKNEGLKFICKTVSIIVENDKTPFTTRLKKGQEILLPIAHGEGNYYVDDKTLKELKGNNQIVFRYKENINGSVERIAGVINKKGNVLGMMPHPERAYDSLLGNTDGLYILGSIVDNFVKGGV.

Positions Lys-2 to Val-224 constitute a Glutamine amidotransferase type-1 domain. The active-site Nucleophile is the Cys-86. Residues His-194 and Glu-196 contribute to the active site.

In terms of assembly, part of the FGAM synthase complex composed of 1 PurL, 1 PurQ and 2 PurS subunits.

Its subcellular location is the cytoplasm. It carries out the reaction N(2)-formyl-N(1)-(5-phospho-beta-D-ribosyl)glycinamide + L-glutamine + ATP + H2O = 2-formamido-N(1)-(5-O-phospho-beta-D-ribosyl)acetamidine + L-glutamate + ADP + phosphate + H(+). The enzyme catalyses L-glutamine + H2O = L-glutamate + NH4(+). The protein operates within purine metabolism; IMP biosynthesis via de novo pathway; 5-amino-1-(5-phospho-D-ribosyl)imidazole from N(2)-formyl-N(1)-(5-phospho-D-ribosyl)glycinamide: step 1/2. Part of the phosphoribosylformylglycinamidine synthase complex involved in the purines biosynthetic pathway. Catalyzes the ATP-dependent conversion of formylglycinamide ribonucleotide (FGAR) and glutamine to yield formylglycinamidine ribonucleotide (FGAM) and glutamate. The FGAM synthase complex is composed of three subunits. PurQ produces an ammonia molecule by converting glutamine to glutamate. PurL transfers the ammonia molecule to FGAR to form FGAM in an ATP-dependent manner. PurS interacts with PurQ and PurL and is thought to assist in the transfer of the ammonia molecule from PurQ to PurL. The polypeptide is Phosphoribosylformylglycinamidine synthase subunit PurQ (Caldanaerobacter subterraneus subsp. tengcongensis (strain DSM 15242 / JCM 11007 / NBRC 100824 / MB4) (Thermoanaerobacter tengcongensis)).